The chain runs to 121 residues: Large ribosomal subunit protein bL21c (121 aa).

Belongs to the bacterial ribosomal protein bL21 family. As to quaternary structure, part of the 50S ribosomal subunit.

Its subcellular location is the plastid. It localises to the chloroplast. This protein binds to 23S rRNA. The sequence is that of Large ribosomal subunit protein bL21c from Huperzia lucidula (Shining clubmoss).